We begin with the raw amino-acid sequence, 586 residues long: MDPEAEEAQLRLEMELAKKAKADMSGLQRSSSLGLDHAGLYPLPLPPGWRSAPTSPLRTPSSPPPLQFPPAWAADVAGTSGSAAPEDDGPARNAGADEATAGSAPKNEDPARAAGADDGPTRSDYAAMMRMALAKFQDDDAAADDEEAASAVMEQAMTGLMDLTYRKAKPPELPYEFATRWPIPIAHDGTLQAEVMRDPVILPSGYSVDQTYQNNQKRQNPWTNTSTFTDHSLPYSLSVPNHLLRDMISAWCLDHSDLSPSTTSDTPSTPLEPSEEEQIQRILKLFSGNSASQREALKLIQLLTKTTKGVQPCLAKYADIIPVLINLRRKYKSSWTQDLEEERLTIILNLTMHRQNREILAGQNELAGAIKKIVKKAGNRGKRTSSLAKVASIVAVLSEFDMFRKRMLDAGGMKMLRGMLKIKDTEVITEAATAILALYADGEGEQPARFHEVPQMLLECHMFTDGILLLLDRLPKSPRVFRKICDQALQLVNIVMAEDASGPVTRKGILSAISLIYEIVERDVGKMNAVKNMEDFIERLRQLSSDRLPMQKMLQVERIIRTLSDAFPAPTVRGRCQEPSGSRLLA.

The interval 21–122 is disordered; it reads KADMSGLQRS…AAGADDGPTR (102 aa). Residues 50 to 60 show a composition bias toward low complexity; it reads RSAPTSPLRTP. Residues 182-258 form the U-box domain; that stretch reads PIPIAHDGTL…SAWCLDHSDL (77 aa).

It carries out the reaction S-ubiquitinyl-[E2 ubiquitin-conjugating enzyme]-L-cysteine + [acceptor protein]-L-lysine = [E2 ubiquitin-conjugating enzyme]-L-cysteine + N(6)-ubiquitinyl-[acceptor protein]-L-lysine.. It functions in the pathway protein modification; protein ubiquitination. Possesses E3 ubiquitin-protein ligase in vitro. The chain is U-box domain-containing protein 73 (PUB73) from Oryza sativa subsp. japonica (Rice).